The following is a 240-amino-acid chain: Phosphatidylserine decarboxylase proenzyme (240 aa).

Ser-209 (schiff-base intermediate with substrate; via pyruvic acid) is an active-site residue. Ser-209 is modified (pyruvic acid (Ser); by autocatalysis).

This sequence belongs to the phosphatidylserine decarboxylase family. PSD-A subfamily. As to quaternary structure, heterodimer of a large membrane-associated beta subunit and a small pyruvoyl-containing alpha subunit. Pyruvate is required as a cofactor. Post-translationally, is synthesized initially as an inactive proenzyme. Formation of the active enzyme involves a self-maturation process in which the active site pyruvoyl group is generated from an internal serine residue via an autocatalytic post-translational modification. Two non-identical subunits are generated from the proenzyme in this reaction, and the pyruvate is formed at the N-terminus of the alpha chain, which is derived from the carboxyl end of the proenzyme. The post-translation cleavage follows an unusual pathway, termed non-hydrolytic serinolysis, in which the side chain hydroxyl group of the serine supplies its oxygen atom to form the C-terminus of the beta chain, while the remainder of the serine residue undergoes an oxidative deamination to produce ammonia and the pyruvoyl prosthetic group on the alpha chain.

The protein resides in the cell membrane. It catalyses the reaction a 1,2-diacyl-sn-glycero-3-phospho-L-serine + H(+) = a 1,2-diacyl-sn-glycero-3-phosphoethanolamine + CO2. It functions in the pathway phospholipid metabolism; phosphatidylethanolamine biosynthesis; phosphatidylethanolamine from CDP-diacylglycerol: step 2/2. Catalyzes the formation of phosphatidylethanolamine (PtdEtn) from phosphatidylserine (PtdSer). This Mycobacterium avium (strain 104) protein is Phosphatidylserine decarboxylase proenzyme.